Consider the following 311-residue polypeptide: tRNA dimethylallyltransferase (311 aa).

An ATP-binding site is contributed by 13 to 20 (GPTASGKT). 15–20 (TASGKT) serves as a coordination point for substrate. Interaction with substrate tRNA regions lie at residues 38–41 (DSMQ) and 166–170 (QRVLR).

Belongs to the IPP transferase family. In terms of assembly, monomer. Mg(2+) is required as a cofactor.

The enzyme catalyses adenosine(37) in tRNA + dimethylallyl diphosphate = N(6)-dimethylallyladenosine(37) in tRNA + diphosphate. In terms of biological role, catalyzes the transfer of a dimethylallyl group onto the adenine at position 37 in tRNAs that read codons beginning with uridine, leading to the formation of N6-(dimethylallyl)adenosine (i(6)A). The polypeptide is tRNA dimethylallyltransferase (Staphylococcus aureus (strain MRSA252)).